Reading from the N-terminus, the 242-residue chain is Venom nerve growth factor 3 (242 aa).

An N-terminal signal peptide occupies residues Met1–Ala18. Positions Ala19–Arg125 are excised as a propeptide. Residues His45 to Pro69 form a disordered region. Basic and acidic residues predominate over residues Glu46 to Asp66. 3 disulfides stabilise this stretch: Cys139-Cys203, Cys181-Cys231, and Cys191-Cys233.

Belongs to the NGF-beta family. As to quaternary structure, homodimer; non-covalently linked. In terms of tissue distribution, expressed by the venom gland.

The protein resides in the secreted. Its function is as follows. Nerve growth factor is important for the development and maintenance of the sympathetic and sensory nervous systems. It stimulates division and differentiation of sympathetic and embryonic sensory neurons as well as basal forebrain cholinergic neurons in the brain. Its relevance in the snake venom is not clear. However, it has been shown to inhibit metalloproteinase-dependent proteolysis of platelet glycoprotein Ib alpha, suggesting a metalloproteinase inhibition to prevent metalloprotease autodigestion and/or protection against prey proteases. Binds a lipid between the two protein chains in the homodimer. The lipid-bound form promotes histamine relase from mouse mast cells, contrary to the lipid-free form. The chain is Venom nerve growth factor 3 from Pseudechis australis (Mulga snake).